Here is a 428-residue protein sequence, read N- to C-terminus: Spliceosome RNA helicase DDX39B (428 aa).

The span at 1–19 shows a compositional bias: acidic residues; it reads MAENDVDNELLDYEDDEVE. The interval 1 to 31 is disordered; it reads MAENDVDNELLDYEDDEVETAAGGDGAEAPA. Ala-2 carries the post-translational modification N-acetylalanine. Residue Lys-36 is modified to N6-acetyllysine; alternate. Lys-36 participates in a covalent cross-link: Glycyl lysine isopeptide (Lys-Gly) (interchain with G-Cter in SUMO2); alternate. Ser-38 and Ser-41 each carry phosphoserine. The Q motif motif lies at 45 to 73; the sequence is SGFRDFLLKPELLRAIVDCGFEHPSEVQH. The Helicase ATP-binding domain maps to 76–249; that stretch reads IPQAILGMDV…RKFMQDPMEI (174 aa). Residue 89-96 coordinates ATP; sequence AKSGMGKT. The residue at position 172 (Thr-172) is a Phosphothreonine. Positions 196 to 199 match the DECD box motif; the sequence is DECD. Residues 261–422 form the Helicase C-terminal domain; the sequence is GLQQYYVKLK…ELPDEIDISS (162 aa).

This sequence belongs to the DEAD box helicase family. DECD subfamily. As to quaternary structure, homodimer, and heterodimer with DDX39A. DDX39B interacts with the THO subcomplex to form the THO-DDX39B complex which multimerizes into a 28-subunit tetrameric assembly. Component of the transcription/export (TREX) complex at least composed of ALYREF/THOC4, DDX39B, SARNP/CIP29, CHTOP and the THO subcomplex; in the complex interacts with THOC2. THOC1-THOC2-THOC3-DDX39B subcomplex is sufficient for the interaction with export factor NXF1-NXT1. TREX seems to have a dynamic structure involving ATP-dependent remodeling. Within the TREX complex bridges ALYREF/THOC4 and the THO subcomplex, and, in a ATP-dependent manner, ALYREF/THOC4 and SARNP/CIP29. Component of the spliceosome. Interacts directly with U2AF2. Interacts with RBM8A, RNPS1 and SRRM1, FYTTD1/UIF, THOC1, MX1 and POLDIP3. Interacts with LUZP4. Interacts with SARNP/CIP29 (via the C-terminal domain); the interaction is direct and facilitates RNA binding of DDX39B. In terms of assembly, (Microbial infection) Interacts with human cytomegalovirus/HHV-5 protein UL69.

It is found in the nucleus. It localises to the nucleus speckle. The protein localises to the cytoplasm. The catalysed reaction is ATP + H2O = ADP + phosphate + H(+). Functionally, involved in nuclear export of spliced and unspliced mRNA. Component of the TREX complex which is thought to couple mRNA transcription, processing and nuclear export, and specifically associates with spliced mRNA and not with unspliced pre-mRNA. The TREX complex is recruited to spliced mRNAs by a transcription-independent mechanism, binds to mRNA upstream of the exon-junction complex (EJC) and is recruited in a splicing- and cap-dependent manner to a region near the 5' end of the mRNA where it functions in mRNA export to the cytoplasm via the TAP/NXF1 pathway. The THOC1-THOC2-THOC3 core complex alone is sufficient to promote ATPase activity of DDX39B; in the complex THOC2 is the only component that directly interacts with DDX39B. Associates with SARNP/CIP29, which facilitates RNA binding of DDX39B and likely plays a role in mRNA export. May undergo several rounds of ATP hydrolysis during assembly of TREX to drive subsequent loading of components such as ALYREF/THOC4 and CHTOP onto mRNA. Also associates with pre-mRNA independent of ALYREF/THOC4. Involved in the nuclear export of intronless mRNA; the ATP-bound form is proposed to recruit export adapter ALYREF/THOC4 to intronless mRNA; its ATPase activity is cooperatively stimulated by RNA and ALYREF/THOC4 and ATP hydrolysis is thought to trigger the dissociation from RNA to allow the association of ALYREF/THOC4 and the NXF1-NXT1 heterodimer. Involved in transcription elongation and genome stability. Splice factor that is required for the first ATP-dependent step in spliceosome assembly and for the interaction of U2 snRNP with the branchpoint. Has both RNA-stimulated ATP binding/hydrolysis activity and ATP-dependent RNA unwinding activity. Even with the stimulation of RNA, the ATPase activity is weak. Can only hydrolyze ATP but not other NTPs. The RNA stimulation of ATPase activity does not have a strong preference for the sequence and length of the RNA. However, ssRNA stimulates the ATPase activity much more strongly than dsRNA. Can unwind 5' or 3' overhangs or blunt end RNA duplexes in vitro. The ATPase and helicase activities are not influenced by U2AF2; the effect of ALYREF/THOC4 is reported conflictingly with [PubMed:23299939] reporting a stimulatory effect. In terms of biological role, (Microbial infection) The TREX complex is essential for the export of Kaposi's sarcoma-associated herpesvirus (KSHV) intronless mRNAs and infectious virus production. This is Spliceosome RNA helicase DDX39B from Homo sapiens (Human).